Reading from the N-terminus, the 530-residue chain is Chaperonin GroEL (530 aa).

Residues T30–P33, K51, D87–T91, G415, and D495 each bind ATP.

Belongs to the chaperonin (HSP60) family. As to quaternary structure, forms a cylinder of 14 subunits composed of two heptameric rings stacked back-to-back. Interacts with the co-chaperonin GroES.

The protein resides in the cytoplasm. It carries out the reaction ATP + H2O + a folded polypeptide = ADP + phosphate + an unfolded polypeptide.. In terms of biological role, together with its co-chaperonin GroES, plays an essential role in assisting protein folding. The GroEL-GroES system forms a nano-cage that allows encapsulation of the non-native substrate proteins and provides a physical environment optimized to promote and accelerate protein folding. This chain is Chaperonin GroEL, found in Carsonella ruddii (strain PV).